We begin with the raw amino-acid sequence, 253 residues long: Tryptophan synthase alpha chain (253 aa).

Catalysis depends on proton acceptor residues glutamate 45 and aspartate 56.

This sequence belongs to the TrpA family. In terms of assembly, tetramer of two alpha and two beta chains.

The enzyme catalyses (1S,2R)-1-C-(indol-3-yl)glycerol 3-phosphate + L-serine = D-glyceraldehyde 3-phosphate + L-tryptophan + H2O. It participates in amino-acid biosynthesis; L-tryptophan biosynthesis; L-tryptophan from chorismate: step 5/5. Functionally, the alpha subunit is responsible for the aldol cleavage of indoleglycerol phosphate to indole and glyceraldehyde 3-phosphate. The sequence is that of Tryptophan synthase alpha chain from Flavobacterium johnsoniae (strain ATCC 17061 / DSM 2064 / JCM 8514 / BCRC 14874 / CCUG 350202 / NBRC 14942 / NCIMB 11054 / UW101) (Cytophaga johnsonae).